The following is a 318-amino-acid chain: Protein disulfide-isomerase MPD1 (318 aa).

The first 21 residues, 1–21 (MLFLNIIKLLLGLFIMNEVKA), serve as a signal peptide directing secretion. A Thioredoxin domain is found at 22 to 158 (QNFYDSDPHI…SLSRIRSYVK (137 aa)). N-linked (GlcNAc...) asparagine glycosylation is present at N47. The cysteines at positions 59 and 62 are disulfide-linked. N307 carries an N-linked (GlcNAc...) asparagine glycan. Positions 315-318 (HDEL) match the Prevents secretion from ER motif.

The protein belongs to the protein disulfide isomerase family. As to quaternary structure, interacts with CNE1 and EPS1.

Its subcellular location is the endoplasmic reticulum lumen. It catalyses the reaction Catalyzes the rearrangement of -S-S- bonds in proteins.. In terms of biological role, participates in the folding of proteins containing disulfide bonds. The chain is Protein disulfide-isomerase MPD1 (MPD1) from Saccharomyces cerevisiae (strain ATCC 204508 / S288c) (Baker's yeast).